The sequence spans 38 residues: Large ribosomal subunit protein bL36 (38 aa).

It belongs to the bacterial ribosomal protein bL36 family.

The chain is Large ribosomal subunit protein bL36 from Flavobacterium johnsoniae (strain ATCC 17061 / DSM 2064 / JCM 8514 / BCRC 14874 / CCUG 350202 / NBRC 14942 / NCIMB 11054 / UW101) (Cytophaga johnsonae).